Consider the following 380-residue polypeptide: Cytochrome b (380 aa).

The next 4 helical transmembrane spans lie at 34-54 (FGSL…LLAM), 78-99 (WLIR…YLHI), 114-134 (WNTG…GYVL), and 179-199 (FFAL…IHLT). Positions 84 and 98 each coordinate heme b. 2 residues coordinate heme b: His183 and His197. His202 contributes to the a ubiquinone binding site. Helical transmembrane passes span 227–247 (LKDI…ALFS), 289–309 (LGGV…PLLH), 321–341 (LSQL…WIGS), and 348–368 (FIII…VLFP).

Belongs to the cytochrome b family. In terms of assembly, the cytochrome bc1 complex contains 11 subunits: 3 respiratory subunits (MT-CYB, CYC1 and UQCRFS1), 2 core proteins (UQCRC1 and UQCRC2) and 6 low-molecular weight proteins (UQCRH/QCR6, UQCRB/QCR7, UQCRQ/QCR8, UQCR10/QCR9, UQCR11/QCR10 and a cleavage product of UQCRFS1). This cytochrome bc1 complex then forms a dimer. It depends on heme b as a cofactor.

It is found in the mitochondrion inner membrane. In terms of biological role, component of the ubiquinol-cytochrome c reductase complex (complex III or cytochrome b-c1 complex) that is part of the mitochondrial respiratory chain. The b-c1 complex mediates electron transfer from ubiquinol to cytochrome c. Contributes to the generation of a proton gradient across the mitochondrial membrane that is then used for ATP synthesis. This Thalassarche impavida (Albatross) protein is Cytochrome b (MT-CYB).